The chain runs to 966 residues: Muscular LMNA-interacting protein (966 aa).

Ser-129 is modified (phosphoserine). 8 disordered regions span residues 132–154, 182–207, 303–337, 354–388, 434–562, 597–684, 785–837, and 929–966; these read EDEA…IATR, SHPE…TSEQ, LAPE…SLRS, PSPK…LKSP, IKQT…TRPS, KRTC…TPSL, SMHS…SQLT, and SLRD…DSKE. The tract at residues 144-810 is required for interaction with ISL1; it reads PPGATGNIAT…GSETIKTPTT (667 aa). Polar residues-rich tracts occupy residues 195 to 207 and 325 to 337; these read KHGQ…TSEQ and TSPS…SLRS. Low complexity-rich tracts occupy residues 354-387, 437-455, and 478-497; these read PSPK…GLKS, TPST…TGST, and PLSQ…SYAA. Ser-486 is subject to Phosphoserine. Over residues 507–521 the composition is skewed to polar residues; the sequence is TLRSSTTPPQSQTDL. 2 stretches are compositionally biased toward basic and acidic residues: residues 542–555 and 597–607; these read GRKD…EKNR and KRTCSQRHSDQ. Polar residues-rich tracts occupy residues 639–649 and 657–684; these read SSLTQALQRSP and GSAT…TPSL. Over residues 785–797 the composition is skewed to low complexity; sequence SMHSSDSPSRPSQ. Ser-791 is modified (phosphoserine). The segment covering 798–810 has biased composition (polar residues); sequence TMLGSETIKTPTT. Low complexity predominate over residues 825–834; sequence SSSSSTTSES. The span at 937-946 shows a compositional bias: polar residues; it reads SPTLLSQDTY. Positions 957–966 are enriched in basic and acidic residues; it reads PEHDTLDSKE.

As to quaternary structure, directly interacts with LMNA. Interacts with ISL1 (via N-terminal domain); the interaction represses ISL1 transactivator activity. Interactions of ISL1 with MLIP1 and GCN5/KAT2A may be mutually exclusive. In terms of tissue distribution, expressed in cardiomyoctes. Expression is highly reduced in hypertrophic cardiomyocytes.

The protein resides in the nucleus. It localises to the nucleus envelope. The protein localises to the PML body. Its subcellular location is the cytoplasm. It is found in the cytosol. The protein resides in the cell membrane. It localises to the sarcolemma. Its function is as follows. Required for myoblast differentiation into myotubes, possibly acting as a transcriptional regulator of the myogenic program. Required for cardiac adaptation to stress through integrated regulation of the AKT/mTOR pathways and FOXO1. Regulates cardiac homeostasis and plays a role in the protection against cardiac hypertrophy. Binds chromatin. May act as a transcriptional cofactor for ISL1, repressing its transcriptional activity. May also repress MYOCD transcriptional activity. This Rattus norvegicus (Rat) protein is Muscular LMNA-interacting protein.